We begin with the raw amino-acid sequence, 149 residues long: Large ribosomal subunit protein bL9 (149 aa).

The protein belongs to the bacterial ribosomal protein bL9 family.

Its function is as follows. Binds to the 23S rRNA. This Xanthomonas axonopodis pv. citri (strain 306) protein is Large ribosomal subunit protein bL9.